Here is a 657-residue protein sequence, read N- to C-terminus: Probable potassium transport system protein Kup (657 aa).

12 helical membrane passes run 15–35, 48–68, 100–120, 147–167, 173–193, 219–239, 251–271, 292–312, 348–368, 378–398, 403–423, and 431–451; these read SFLI…LYVM, ITPD…TLLT, WLII…MLTP, IIII…HFGT, IFGP…IVNL, LGFF…ALYS, LTWP…AAWI, MMPS…AIIA, IYMP…VLYF, YGLS…NYLL, PLPI…SFLI, and KGGF…YIWI.

This sequence belongs to the HAK/KUP transporter (TC 2.A.72) family.

It is found in the cell membrane. It catalyses the reaction K(+)(in) + H(+)(in) = K(+)(out) + H(+)(out). Transport of potassium into the cell. Likely operates as a K(+):H(+) symporter. The sequence is that of Probable potassium transport system protein Kup from Clostridium perfringens (strain SM101 / Type A).